Reading from the N-terminus, the 277-residue chain is Acetyl-coenzyme A carboxylase carboxyl transferase subunit beta (277 aa).

A CoA carboxyltransferase N-terminal domain is found at 25-277 (LVRRCPVCHT…DLLRLHKGES (253 aa)). 4 residues coordinate Zn(2+): Cys-29, Cys-32, Cys-47, and Cys-50. Residues 29–50 (CPVCHTTFLTDHWEPTRLCPAC) form a C4-type zinc finger.

The protein belongs to the AccD/PCCB family. Acetyl-CoA carboxylase is a heterohexamer composed of biotin carboxyl carrier protein (AccB), biotin carboxylase (AccC) and two subunits each of ACCase subunit alpha (AccA) and ACCase subunit beta (AccD). Zn(2+) serves as cofactor.

It localises to the cytoplasm. It catalyses the reaction N(6)-carboxybiotinyl-L-lysyl-[protein] + acetyl-CoA = N(6)-biotinyl-L-lysyl-[protein] + malonyl-CoA. Its pathway is lipid metabolism; malonyl-CoA biosynthesis; malonyl-CoA from acetyl-CoA: step 1/1. Component of the acetyl coenzyme A carboxylase (ACC) complex. Biotin carboxylase (BC) catalyzes the carboxylation of biotin on its carrier protein (BCCP) and then the CO(2) group is transferred by the transcarboxylase to acetyl-CoA to form malonyl-CoA. This is Acetyl-coenzyme A carboxylase carboxyl transferase subunit beta from Levilactobacillus brevis (strain ATCC 367 / BCRC 12310 / CIP 105137 / JCM 1170 / LMG 11437 / NCIMB 947 / NCTC 947) (Lactobacillus brevis).